An 872-amino-acid chain; its full sequence is MKSTFLLLLLLLSLNLLFVFVSCASSIEFVYPNFTASNLRFVDSSKGAFLLSRNSIFKAGLFSPGGDDSSTGFYFSVVHVDSGSTIWSSNRDSPVSSSGTMNLTPQGISVIEDGKSQIPVWSTPVLASPVKSLRLTDAGNLLLLDHLNVSLWESFDFPTDSIVLGQRLKLGMFLSGSVSRSDFSTGDYKFLVGESDGLMQWRGQNYWKLRMHIRANVDSNFPVEYLTVTTSGLALMARNGTVVVVRVALPPSSDFRVAKMDSSGKFIVSRFSGKNLVTEFSGPMDSCQIPFVCGKLGLCNLDNASENQSCSCPDEMRMDAGKGVCVPVSQSLSLPVSCEARNISYLELGLGVSYFSTHFTDPVEHGLPLLACHDICSKNCSCLGVFYENTSRSCYLVKDSFGSLSLVKNSPENHDLIGYVKLSIRKTNAQPPGNNNRGGSSFPVIALVLLPCSGFFLLIALGLLWWRRCAVMRYSSIREKQVTRPGSFESGDLGSFHIPGLPQKFEFEELEQATENFKMQIGSGGFGSVYKGTLPDETLIAVKKITNHGLHGRQEFCTEIAIIGNIRHTNLVKLRGFCARGRQLLLVYEYMNHGSLEKTLFSGNGPVLEWQERFDIALGTARGLAYLHSGCDQKIIHCDVKPENILLHDHFQPKISDFGLSKLLNQEESSLFTTMRGTRGYLAPEWITNAAISEKADVYSYGMVLLELVSGRKNCSFRSRSNSVTEDNNQNHSSTTTTSTGLVYFPLYALDMHEQGRYMELADPRLEGRVTSQEAEKLVRIALCCVHEEPALRPTMAAVVGMFEGSIPLGNPRMESLNFLRFYGLRFAESSMVEGQNGESETMVFHRRESSNSGGSRQSASYIASQEVSGPR.

A signal peptide spans 1–26; that stretch reads MKSTFLLLLLLLSLNLLFVFVSCASS. Over 27–443 the chain is Extracellular; that stretch reads IEFVYPNFTA…NNNRGGSSFP (417 aa). N-linked (GlcNAc...) asparagine glycans are attached at residues asparagine 33, asparagine 148, and asparagine 239. One can recognise a Bulb-type lectin domain in the interval 35-156; the sequence is TASNLRFVDS…LNVSLWESFD (122 aa). The 40-residue stretch at 283–322 folds into the EGF-like; atypical domain; it reads PMDSCQIPFVCGKLGLCNLDNASENQSCSCPDEMRMDAGK. Cystine bridges form between cysteine 287–cysteine 299 and cysteine 293–cysteine 310. N-linked (GlcNAc...) asparagine glycans are attached at residues asparagine 303, asparagine 307, asparagine 342, asparagine 379, and asparagine 389. In terms of domain architecture, PAN spans 338–423; that stretch reads CEARNISYLE…HDLIGYVKLS (86 aa). Cystine bridges form between cysteine 372–cysteine 394 and cysteine 376–cysteine 382. The helical transmembrane segment at 444 to 464 threads the bilayer; that stretch reads VIALVLLPCSGFFLLIALGLL. Over 465-872 the chain is Cytoplasmic; sequence WWRRCAVMRY…IASQEVSGPR (408 aa). One can recognise a Protein kinase domain in the interval 515–814; that stretch reads ENFKMQIGSG…GSIPLGNPRM (300 aa). ATP-binding positions include 521–529 and lysine 543; that span reads IGSGGFGSV. Residues 603 to 620 are caM-binding; that stretch reads GNGPVLEWQERFDIALGT. Aspartate 639 acts as the Proton acceptor in catalysis. A Phosphoserine modification is found at serine 656. Threonine 673 carries the post-translational modification Phosphothreonine. A phosphoserine mark is found at serine 716 and serine 859. Positions 836–872 are disordered; it reads QNGESETMVFHRRESSNSGGSRQSASYIASQEVSGPR. The segment covering 851–861 has biased composition (low complexity); it reads SNSGGSRQSAS. Over residues 862–872 the composition is skewed to polar residues; sequence YIASQEVSGPR.

It belongs to the protein kinase superfamily. Ser/Thr protein kinase family.

The protein localises to the cell membrane. The enzyme catalyses L-seryl-[protein] + ATP = O-phospho-L-seryl-[protein] + ADP + H(+). It catalyses the reaction L-threonyl-[protein] + ATP = O-phospho-L-threonyl-[protein] + ADP + H(+). The sequence is that of G-type lectin S-receptor-like serine/threonine-protein kinase At5g35370 from Arabidopsis thaliana (Mouse-ear cress).